A 1200-amino-acid polypeptide reads, in one-letter code: SR-related and CTD-associated factor 4 (1200 aa).

A CID domain is found at 1-139 (MDAVNAFNQE…PLLDMAAGTS (139 aa)). Residue lysine 49 is modified to N6-acetyllysine. Positions 140–153 (NAAPGAENVTNNEG) are enriched in polar residues. Disordered regions lie at residues 140-172 (NAAP…PTNS), 299-324 (VPAS…MQQP), and 346-566 (SMQH…QIKS). Serine 154 bears the Phosphoserine mark. Composition is skewed to pro residues over residues 367 to 390 (APPP…PGMP) and 399 to 461 (LPQP…PPVQ). The span at 462–471 (PTFQPTFQPQ) shows a compositional bias: low complexity. Residues 493–503 (EVKRHVPESRK) are compositionally biased toward basic and acidic residues. The segment covering 504 to 541 (SRSRSPKRRRSRSGSRSRRSRHRRSRSRSRDRRRHSPR) has biased composition (basic residues). The span at 543–558 (RSQERRDREKERERRQ) shows a compositional bias: basic and acidic residues. Positions 574–648 (TTLWVGQLDK…KSIKIAWALN (75 aa)) constitute an RRM domain. Disordered stretches follow at residues 696–724 (WKGI…VSPI), 834–875 (VSGA…SLLG), and 927–1200 (PPHM…EAPR). Serine 722 bears the Phosphoserine mark. 2 stretches are compositionally biased toward pro residues: residues 856 to 868 (PAAP…PPVT) and 927 to 958 (PPHM…PPHG). A compositionally biased stretch (gly residues) spans 965-978 (GMPGLGGPGPGPGG). Positions 986-1036 (QQQPQQQQQQQQQQQQQQQQQQQQPPPQQSQTQQQPAPSQQPAPAQQQPQQ) are enriched in low complexity. Serine 1058 is modified (phosphoserine). Over residues 1063–1139 (VENDRERYGS…RGKEKHEVAD (77 aa)) the composition is skewed to basic and acidic residues. The span at 1153 to 1162 (QVGNTDTVSE) shows a compositional bias: polar residues. Residue serine 1178 is modified to Phosphoserine.

Interacts with POLR2A; via C-terminal heptapeptide repeat domain (CTD) phosphorylated at 'Ser-2' and 'Ser-5'.

The protein resides in the nucleus. In terms of biological role, anti-terminator protein required to prevent early mRNA termination during transcription. Together with SCAF8, acts by suppressing the use of early, alternative poly(A) sites, thereby preventing the accumulation of non-functional truncated proteins. Mechanistically, associates with the phosphorylated C-terminal heptapeptide repeat domain (CTD) of the largest RNA polymerase II subunit (POLR2A), and subsequently binds nascent RNA upstream of early polyadenylation sites to prevent premature mRNA transcript cleavage and polyadenylation. Independently of SCAF8, also acts as a suppressor of transcriptional readthrough. This Rattus norvegicus (Rat) protein is SR-related and CTD-associated factor 4.